We begin with the raw amino-acid sequence, 298 residues long: Ribosomal protein L11 methyltransferase (298 aa).

Residues threonine 152, glycine 173, aspartate 195, and asparagine 234 each contribute to the S-adenosyl-L-methionine site.

This sequence belongs to the methyltransferase superfamily. PrmA family.

It is found in the cytoplasm. The catalysed reaction is L-lysyl-[protein] + 3 S-adenosyl-L-methionine = N(6),N(6),N(6)-trimethyl-L-lysyl-[protein] + 3 S-adenosyl-L-homocysteine + 3 H(+). Its function is as follows. Methylates ribosomal protein L11. This Ralstonia pickettii (strain 12J) protein is Ribosomal protein L11 methyltransferase.